The primary structure comprises 270 residues: Ribitol operon repressor (270 aa).

An HTH lacI-type domain is found at 1–61 (MKKITIYDLA…INRQASMLRS (61 aa)). A DNA-binding region (H-T-H motif) is located at residues 6–25 (IYDLAELSGVSASAVSAILN).

In terms of biological role, repressor for the genes of the ribitol operon. Binds D-ribulose as an inducer. In Klebsiella aerogenes (Enterobacter aerogenes), this protein is Ribitol operon repressor (rbtR).